A 130-amino-acid polypeptide reads, in one-letter code: Phosphomevalonate dehydratase small subunit (130 aa).

Ser62 acts as the Proton acceptor in catalysis.

This sequence belongs to the AcnX type II small subunit family. As to quaternary structure, heterodimer composed of a large subunit (PMDh-L) and a small subunit (PMDh-S).

It carries out the reaction (R)-5-phosphomevalonate = (2E)-3-methyl-5-phosphooxypent-2-enoate + H2O. It participates in isoprenoid biosynthesis; isopentenyl diphosphate biosynthesis via mevalonate pathway. Functionally, component of a hydro-lyase that catalyzes the dehydration of mevalonate 5-phosphate (MVA5P) to form trans-anhydromevalonate 5-phosphate (tAHMP). Involved in the archaeal mevalonate (MVA) pathway, which provides fundamental precursors for isoprenoid biosynthesis, such as isopentenyl diphosphate (IPP) and dimethylallyl diphosphate (DMAPP). This is Phosphomevalonate dehydratase small subunit from Thermococcus onnurineus (strain NA1).